Reading from the N-terminus, the 353-residue chain is Variable large protein 17 (353 aa).

The signal sequence occupies residues 1–18; that stretch reads MRKRISAIIMTLFMVLVS. Cysteine 19 carries the N-palmitoyl cysteine lipid modification. Cysteine 19 is lipidated: S-diacylglycerol cysteine. Residues 332–353 form a disordered region; it reads EDKSVEATNTAEATTSGQQAKN. Polar residues predominate over residues 337 to 353; it reads EATNTAEATTSGQQAKN.

It belongs to the variable large protein (Vlp) family. Delta subfamily.

It is found in the cell outer membrane. In terms of biological role, the Vlp and Vsp proteins are antigenically distinct proteins, only one vlp or vsp gene is transcriptionally active at any one time. Switching between these genes is a mechanism of host immune response evasion. In Borrelia hermsii, this protein is Variable large protein 17.